We begin with the raw amino-acid sequence, 1058 residues long: Non-canonical non-ribosomal peptide synthetase FUB8 (1058 aa).

Residues E43–E365 form an adenylation (A) domain region. The Carrier domain maps to T566–L643. S601 is subject to O-(pantetheine 4'-phosphoryl)serine. The thioester reductase (TR) domain stretch occupies residues L680 to I921.

Its pathway is mycotoxin biosynthesis. In terms of biological role, non-canonical non-ribosomal peptide synthetase; part of the gene cluster that mediates the biosynthesis of fusaric acid, a mycotoxin with low to moderate toxicity to animals and humans, but with high phytotoxic properties. L-aspartate is suggested as fusaric acid amino acid precursor that is activated and further processed to O-acetyl-L-homoserine by cluster enzymes aspartate kinase FUB3 and homoserine O-acetyltransferase FUB5, as well as enzymes of the primary metabolism. The polyketide synthase (PKS) FUB1 generates the triketide trans-2-hexenal which is presumptively released by the hydrolase FUB4 and linked to the NRPS-bound amino acid precursor by NAD(P)-dependent dehydrogenase FUB6. FUB1, FUB4, and the non-canonical NRPS Fub8 may form an enzyme complex. Further processing of the NRPS-bound intermediate might be carried out by FUB6 and the sulfhydrylase FUB7, enabling a spontaneous electrocyclization to close the carbon backbone of fusaric acid. Dihydrofusaric acid is likely to be released via reduction by the thioester reductase (TR) domain of FUB8 whereupon the final oxidation to fusaric acid may (also) be performed by the FMN-dependent dehydrogenase FUB9. The chain is Non-canonical non-ribosomal peptide synthetase FUB8 from Gibberella moniliformis (strain M3125 / FGSC 7600) (Maize ear and stalk rot fungus).